The chain runs to 283 residues: Lactoylglutathione lyase GLX1 (283 aa).

An N-acetylalanine modification is found at A2. VOC domains follow at residues 17–141 (RFLH…LIQR) and 147–275 (PFCQ…LVDN). H20 provides a ligand contact to Zn(2+). Residue R24 participates in substrate binding. E71 is a binding site for Zn(2+). Residues N75 and H89 each contribute to the substrate site. The Zn(2+) site is built by H89, E137, and Q150. E137 (proton donor/acceptor) is an active-site residue. Substrate contacts are provided by Q150 and R154. Q150 contacts a divalent metal cation. A Zn(2+)-binding site is contributed by E201. E201 lines the a divalent metal cation pocket. Residue N205 coordinates substrate. Q219 is a binding site for a divalent metal cation. 251 to 252 (PL) is a binding site for substrate. V271 is a binding site for a divalent metal cation.

It belongs to the glyoxalase I family. Homodimer. Zn(2+) serves as cofactor. In terms of processing, phosphorylated by SnRK2.8.

The enzyme catalyses (R)-S-lactoylglutathione = methylglyoxal + glutathione. It functions in the pathway secondary metabolite metabolism; methylglyoxal degradation; (R)-lactate from methylglyoxal: step 1/2. Functionally, catalyzes the conversion of hemimercaptal, formed from methylglyoxal and glutathione, to S-lactoylglutathione. This Arabidopsis thaliana (Mouse-ear cress) protein is Lactoylglutathione lyase GLX1.